The sequence spans 440 residues: Chromosome partition protein MukF (440 aa).

The tract at residues 208–236 is leucine-zipper; sequence LSETSGTLRELQDTLEAAGDKLQANLLQI.

Belongs to the MukF family. As to quaternary structure, interacts, and probably forms a ternary complex, with MukE and MukB via its C-terminal region. The complex formation is stimulated by calcium or magnesium. It is required for an interaction between MukE and MukB.

It localises to the cytoplasm. Its subcellular location is the nucleoid. In terms of biological role, involved in chromosome condensation, segregation and cell cycle progression. May participate in facilitating chromosome segregation by condensation DNA from both sides of a centrally located replisome during cell division. Not required for mini-F plasmid partitioning. Probably acts via its interaction with MukB and MukE. Overexpression results in anucleate cells. It has a calcium binding activity. The protein is Chromosome partition protein MukF of Cronobacter sakazakii (strain ATCC BAA-894) (Enterobacter sakazakii).